A 272-amino-acid polypeptide reads, in one-letter code: 3-methyl-2-oxobutanoate hydroxymethyltransferase (272 aa).

Residues Asp51 and Asp90 each contribute to the Mg(2+) site. 3-methyl-2-oxobutanoate is bound by residues 51-52, Asp90, and Lys120; that span reads DS. Glu122 is a binding site for Mg(2+). Glu189 functions as the Proton acceptor in the catalytic mechanism.

Belongs to the PanB family. Homodecamer; pentamer of dimers. Mg(2+) is required as a cofactor.

The protein resides in the cytoplasm. The catalysed reaction is 3-methyl-2-oxobutanoate + (6R)-5,10-methylene-5,6,7,8-tetrahydrofolate + H2O = 2-dehydropantoate + (6S)-5,6,7,8-tetrahydrofolate. It participates in cofactor biosynthesis; (R)-pantothenate biosynthesis; (R)-pantoate from 3-methyl-2-oxobutanoate: step 1/2. In terms of biological role, catalyzes the reversible reaction in which hydroxymethyl group from 5,10-methylenetetrahydrofolate is transferred onto alpha-ketoisovalerate to form ketopantoate. The sequence is that of 3-methyl-2-oxobutanoate hydroxymethyltransferase from Syntrophus aciditrophicus (strain SB).